A 310-amino-acid chain; its full sequence is MAGNNFTEVTVFILSGFANHPELQVSLFLMFLFIYLFTVLGNLGLITLIRMDSQLHTPMYFFLSNLAFIDIFYSSTVTPKALVNFQSNRRSISFVGCFVQMYFFVGLVCCECFLLGSMAYNRYIAICNPLLYSVVMSQKVSNWLGVMPYVIGFTSSLISVWVISSLAFCDSSINHFFCDTTALLALSCVDTFGTEMVSFVLAGFTLLSSLLIITVTYIIIISAILRIQSAAGRQKAFSTCASHLMAVTIFYGSLIFTYLQPDNTSSLTQAQVASVFYTIVIPMLNPLIYSLRNKDVKNALLRVIHRKLFP.

Over 1–25 the chain is Extracellular; sequence MAGNNFTEVTVFILSGFANHPELQV. An N-linked (GlcNAc...) asparagine glycan is attached at asparagine 5. Residues 26-46 form a helical membrane-spanning segment; it reads SLFLMFLFIYLFTVLGNLGLI. Residues 47 to 54 are Cytoplasmic-facing; sequence TLIRMDSQ. Residues 55–75 traverse the membrane as a helical segment; sequence LHTPMYFFLSNLAFIDIFYSS. Topologically, residues 76–99 are extracellular; the sequence is TVTPKALVNFQSNRRSISFVGCFV. The cysteines at positions 97 and 188 are disulfide-linked. A helical transmembrane segment spans residues 100–120; it reads QMYFFVGLVCCECFLLGSMAY. Residues 121 to 139 are Cytoplasmic-facing; it reads NRYIAICNPLLYSVVMSQK. Residues 140–160 form a helical membrane-spanning segment; it reads VSNWLGVMPYVIGFTSSLISV. Residues 161-196 lie on the Extracellular side of the membrane; that stretch reads WVISSLAFCDSSINHFFCDTTALLALSCVDTFGTEM. Residues 197–216 traverse the membrane as a helical segment; it reads VSFVLAGFTLLSSLLIITVT. Residues 217–236 are Cytoplasmic-facing; it reads YIIIISAILRIQSAAGRQKA. A helical membrane pass occupies residues 237-257; sequence FSTCASHLMAVTIFYGSLIFT. The Extracellular portion of the chain corresponds to 258–270; that stretch reads YLQPDNTSSLTQA. Residues 271–291 traverse the membrane as a helical segment; that stretch reads QVASVFYTIVIPMLNPLIYSL. Residues 292–310 lie on the Cytoplasmic side of the membrane; the sequence is RNKDVKNALLRVIHRKLFP.

The protein belongs to the G-protein coupled receptor 1 family.

It localises to the cell membrane. Functionally, odorant receptor. The polypeptide is Olfactory receptor 8I2 (OR8I2) (Homo sapiens (Human)).